Reading from the N-terminus, the 131-residue chain is Translation initiation factor 5A (131 aa).

The residue at position 36 (Lys36) is a Hypusine.

It belongs to the eIF-5A family.

The protein resides in the cytoplasm. In terms of biological role, functions by promoting the formation of the first peptide bond. This is Translation initiation factor 5A from Sulfurisphaera tokodaii (strain DSM 16993 / JCM 10545 / NBRC 100140 / 7) (Sulfolobus tokodaii).